The sequence spans 448 residues: Potassium/proton antiporter CemA (448 aa).

4 helical membrane-spanning segments follow: residues 224 to 244, 325 to 345, 373 to 393, and 408 to 428; these read ALAS…ISML, IILH…LFII, ILLL…EIVI, and IISC…KYWI.

This sequence belongs to the CemA family.

The protein resides in the plastid. It is found in the chloroplast inner membrane. It catalyses the reaction K(+)(in) + H(+)(out) = K(+)(out) + H(+)(in). Functionally, contributes to K(+)/H(+) antiport activity by supporting proton efflux to control proton extrusion and homeostasis in chloroplasts in a light-dependent manner to modulate photosynthesis. Prevents excessive induction of non-photochemical quenching (NPQ) under continuous-light conditions. Indirectly promotes efficient inorganic carbon uptake into chloroplasts. In Angiopteris evecta (Mule's foot fern), this protein is Potassium/proton antiporter CemA.